The primary structure comprises 227 residues: Transcriptional regulatory protein TdiR (227 aa).

The Response regulatory domain occupies 11-125; the sequence is TVFVVDDEAS…DLLDAVNAAL (115 aa). Asp-60 is subject to 4-aspartylphosphate. The HTH luxR-type domain occupies 141–206; that stretch reads HLDLLATLSQ…DLMHFVMRGS (66 aa). Residues 165-184 constitute a DNA-binding region (H-T-H motif); that stretch reads SKEIAKLLGISYKTVEAHRG.

In terms of processing, phosphorylated by TdiS.

Functionally, member of the two-component regulatory system TdiR/TdiS, which probably regulates transcription of toluene catabolic genes (bss operon). Binds to DNA. The protein is Transcriptional regulatory protein TdiR (tdiR) of Thauera aromatica.